The chain runs to 280 residues: MQEVISYIQKAVLEISNALKFPDTGYSQNQNFTGDTQLKFDVLSDEIITKTLSQCSSIKAIISEEKDEILTLNEKANFIVAYDPLDGSSLMDVNFAIGSIFAIYEEKASAKNLRAALYSMYGARLELVICKDQPKLYRLNANNEFIFIKDLKMNEKGKINATGGTQKFWEEKHAKFIKSLFDEGYRLRYSGAMVSDINQILLKGGGIFSYPATQDAPNGKLRAFFEVFPLAFIIEKAGGKTTNGKNHSLLELEFDKIHATTPCFFGSEYEISKLLKAYNE.

Residues Glu64, Asp83, Leu85, and Asp86 each coordinate Mg(2+). Residues 86–89, Tyr189, and Lys220 contribute to the substrate site; that span reads DGSS. Residue Glu226 coordinates Mg(2+).

The protein belongs to the FBPase class 1 family. Homotetramer. The cofactor is Mg(2+).

The protein localises to the cytoplasm. The enzyme catalyses beta-D-fructose 1,6-bisphosphate + H2O = beta-D-fructose 6-phosphate + phosphate. It functions in the pathway carbohydrate biosynthesis; gluconeogenesis. This is Fructose-1,6-bisphosphatase class 1 from Campylobacter jejuni subsp. jejuni serotype O:23/36 (strain 81-176).